The following is a 100-amino-acid chain: Small ribosomal subunit protein bS20 (100 aa).

The segment covering 1–18 (MPNKKSAEKRVRQSEQRR) has biased composition (basic and acidic residues). Positions 1-26 (MPNKKSAEKRVRQSEQRRQKNRGYQK) are disordered.

The protein belongs to the bacterial ribosomal protein bS20 family.

Functionally, binds directly to 16S ribosomal RNA. This Petrotoga mobilis (strain DSM 10674 / SJ95) protein is Small ribosomal subunit protein bS20.